The chain runs to 735 residues: Ribosomal protein S6 kinase alpha-1 (735 aa).

Ser54 is modified (phosphoserine). The 260-residue stretch at 62–321 folds into the Protein kinase 1 domain; it reads FELLKVLGQG…AEEIKRHIFY (260 aa). ATP contacts are provided by residues 68-76 and Lys94; that span reads LGQGSFGKV. Asp187 acts as the Proton acceptor in catalysis. Ser221 is modified (phosphoserine; by PDPK1). Ser307 carries the post-translational modification Phosphoserine. One can recognise an AGC-kinase C-terminal domain in the interval 322-391; the sequence is STIDWNKLYR…VATGLMEDDS (70 aa). Residue Thr359 is modified to Phosphothreonine. Position 363 is a phosphoserine (Ser363). Phosphoserine; by autocatalysis occurs at positions 369 and 380. A Protein kinase 2 domain is found at 418–675; the sequence is YIVKETIGVG…AKQVLQHPWI (258 aa). ATP contacts are provided by residues 424-432 and Lys447; that span reads IGVGSYSVC. Asp535 (proton acceptor) is an active-site residue. Thr573 is modified (phosphothreonine). The residue at position 732 (Ser732) is a Phosphoserine.

It belongs to the protein kinase superfamily. AGC Ser/Thr protein kinase family. S6 kinase subfamily. As to quaternary structure, forms a complex with either MAPK1/ERK2 or MAPK3/ERK1 in quiescent cells. Transiently dissociates following mitogenic stimulation. Interacts with ETV1/ER81 and FGFR1. The cofactor is Mg(2+). Activated by phosphorylation at Ser-221 by PDPK1. Autophosphorylated on Ser-380, as part of the activation process. May be phosphorylated at Thr-359 and Ser-363 by MAPK1/ERK2 and MAPK3/ERK1. Post-translationally, N-terminal myristoylation results in an activated kinase in the absence of added growth factors.

It localises to the nucleus. The protein localises to the cytoplasm. It carries out the reaction L-seryl-[protein] + ATP = O-phospho-L-seryl-[protein] + ADP + H(+). It catalyses the reaction L-threonyl-[protein] + ATP = O-phospho-L-threonyl-[protein] + ADP + H(+). With respect to regulation, upon extracellular signal or mitogen stimulation, phosphorylated at Thr-573 in the C-terminal kinase domain (CTKD) by MAPK1/ERK2 and MAPK3/ERK1. The activated CTKD then autophosphorylates Ser-380, allowing binding of PDPK1, which in turn phosphorylates Ser-221 in the N-terminal kinase domain (NTDK) leading to the full activation of the protein and subsequent phosphorylation of the substrates by the NTKD. In terms of biological role, serine/threonine-protein kinase that acts downstream of ERK (MAPK1/ERK2 and MAPK3/ERK1) signaling and mediates mitogenic and stress-induced activation of the transcription factors CREB1, ETV1/ER81 and NR4A1/NUR77, regulates translation through RPS6 and EIF4B phosphorylation, and mediates cellular proliferation, survival, and differentiation by modulating mTOR signaling and repressing pro-apoptotic function of BAD and DAPK1. In fibroblast, is required for EGF-stimulated phosphorylation of CREB1, which results in the subsequent transcriptional activation of several immediate-early genes. In response to mitogenic stimulation (EGF and PMA), phosphorylates and activates NR4A1/NUR77 and ETV1/ER81 transcription factors and the cofactor CREBBP. Upon insulin-derived signal, acts indirectly on the transcription regulation of several genes by phosphorylating GSK3B at 'Ser-9' and inhibiting its activity. Phosphorylates RPS6 in response to serum or EGF via an mTOR-independent mechanism and promotes translation initiation by facilitating assembly of the pre-initiation complex. In response to insulin, phosphorylates EIF4B, enhancing EIF4B affinity for the EIF3 complex and stimulating cap-dependent translation. Is involved in the mTOR nutrient-sensing pathway by directly phosphorylating TSC2 at 'Ser-1798', which potently inhibits TSC2 ability to suppress mTOR signaling, and mediates phosphorylation of RPTOR, which regulates mTORC1 activity and may promote rapamycin-sensitive signaling independently of the PI3K/AKT pathway. Also involved in feedback regulation of mTORC1 and mTORC2 by phosphorylating DEPTOR. Mediates cell survival by phosphorylating the pro-apoptotic proteins BAD and DAPK1 and suppressing their pro-apoptotic function. Promotes the survival of hepatic stellate cells by phosphorylating CEBPB in response to the hepatotoxin carbon tetrachloride (CCl4). Mediates induction of hepatocyte prolifration by TGFA through phosphorylation of CEBPB. Is involved in cell cycle regulation by phosphorylating the CDK inhibitor CDKN1B, which promotes CDKN1B association with 14-3-3 proteins and prevents its translocation to the nucleus and inhibition of G1 progression. Phosphorylates EPHA2 at 'Ser-897', the RPS6KA-EPHA2 signaling pathway controls cell migration. In response to mTORC1 activation, phosphorylates EIF4B at 'Ser-406' and 'Ser-422' which stimulates bicarbonate cotransporter SLC4A7 mRNA translation, increasing SLC4A7 protein abundance and function. This Rattus norvegicus (Rat) protein is Ribosomal protein S6 kinase alpha-1 (Rps6ka1).